The primary structure comprises 342 residues: MRIEEFDYELPPGQIAQQPVEPRDASRLLVLHREGGFLEHRHFYDLPRYLHPGDVLVVNETKVIPARLWGYRAGTGAKIEVLLLTRQEGDTWETLVRPGRRVPVGAELIFGRGELQARVKGVTPAGGRIMEFSYQEGPWEALLERLGEMPLPPYIKEKPADPGRYQTVYAREEGSAAAPTAGLHFTPRLLKELREQGIEIASILLHVGLGTFRPVKVENIQEHVMHAEYYAVTPAAAATINAARARGHRVVAVGTTVVRTLETVATADGVIHAGSGWTDIFIYPGYRFKAIDSLITNFHLPRSTLLMLVSAFAGREKILDAYRVAVREGYRFYSFGDAMLIL.

This sequence belongs to the QueA family. Monomer.

It is found in the cytoplasm. It carries out the reaction 7-aminomethyl-7-carbaguanosine(34) in tRNA + S-adenosyl-L-methionine = epoxyqueuosine(34) in tRNA + adenine + L-methionine + 2 H(+). It functions in the pathway tRNA modification; tRNA-queuosine biosynthesis. Transfers and isomerizes the ribose moiety from AdoMet to the 7-aminomethyl group of 7-deazaguanine (preQ1-tRNA) to give epoxyqueuosine (oQ-tRNA). The chain is S-adenosylmethionine:tRNA ribosyltransferase-isomerase from Moorella thermoacetica (strain ATCC 39073 / JCM 9320).